We begin with the raw amino-acid sequence, 154 residues long: Acidic phospholipase A2 1 (154 aa).

The first 19 residues, 1–19 (MHPAHLLVLLGVCVSLLGA), serve as a signal peptide directing secretion. A propeptide spanning residues 20–27 (ARIPPLPL) is cleaved from the precursor. 7 cysteine pairs are disulfide-bonded: Cys-38-Cys-104, Cys-54-Cys-153, Cys-56-Cys-72, Cys-71-Cys-132, Cys-78-Cys-125, Cys-88-Cys-118, and Cys-111-Cys-123. Ca(2+)-binding residues include Phe-55, Gly-57, and Gly-59. Residue His-75 is part of the active site. Residue Asp-76 participates in Ca(2+) binding. The active site involves Asp-126.

It belongs to the phospholipase A2 family. Group I subfamily. D49 sub-subfamily. As to quaternary structure, monomer. Ca(2+) serves as cofactor. In terms of tissue distribution, expressed by the venom gland.

The protein localises to the secreted. It catalyses the reaction a 1,2-diacyl-sn-glycero-3-phosphocholine + H2O = a 1-acyl-sn-glycero-3-phosphocholine + a fatty acid + H(+). Functionally, snake venom phospholipase A2 (PLA2) that shows moderate enzymatic activity and exhibits procoagulant activity. PLA2 catalyzes the calcium-dependent hydrolysis of the 2-acyl groups in 3-sn-phosphoglycerides. The polypeptide is Acidic phospholipase A2 1 (Pseudonaja textilis (Eastern brown snake)).